A 162-amino-acid polypeptide reads, in one-letter code: Large ribosomal subunit protein bL17 (162 aa).

The tract at residues 126–162 (KKEEVKTKSRRGGKAKKAEPTTEAPANTTEETTDSAE) is disordered. Low complexity predominate over residues 146 to 155 (TTEAPANTTE).

Belongs to the bacterial ribosomal protein bL17 family. In terms of assembly, part of the 50S ribosomal subunit. Contacts protein L32.

In Flavobacterium psychrophilum (strain ATCC 49511 / DSM 21280 / CIP 103535 / JIP02/86), this protein is Large ribosomal subunit protein bL17.